We begin with the raw amino-acid sequence, 80 residues long: UPF0512 protein Q (80 aa).

It belongs to the UPF0512 family.

This is UPF0512 protein Q from Dictyostelium discoideum (Social amoeba).